Reading from the N-terminus, the 541-residue chain is Solute carrier family 22 member 10 (541 aa).

Topologically, residues 1 to 15 (MAFEELLSQVGGLGR) are cytoplasmic. Residues 16–36 (FQMLHLVFILPSLMLLIPHIL) form a helical membrane-spanning segment. The Extracellular segment spans residues 37–145 (LENFAAAIPG…DLVCDYQSLK (109 aa)). N-linked (GlcNAc...) asparagine glycosylation is found at asparagine 56 and asparagine 102. Residues 146–166 (SVVQFLLLTGMLVGGIIGGHV) traverse the membrane as a helical segment. Topologically, residues 167 to 193 (SDRFGRRFILRWCLLQLAITDTCAAFA) are cytoplasmic. A helical membrane pass occupies residues 194–214 (PTFPVYCVLRFLAGFSSMIII). Residues 215–230 (SNNSLPITEWIRPNSK) lie on the Extracellular side of the membrane. A helical transmembrane segment spans residues 231–251 (ALVVILSSGALSIGQIILGGL). Residues 252–259 (AYVFRDWQ) lie on the Cytoplasmic side of the membrane. A helical membrane pass occupies residues 260 to 280 (TLHVVASVPFFVFFLLSRWLV). The Extracellular segment spans residues 281–349 (ESARWLIITN…LFRNPSMRKR (69 aa)). A helical membrane pass occupies residues 350–370 (ICILVFLRFANTIPFYGTMVN). The Cytoplasmic portion of the chain corresponds to 371–377 (LQHVGSN). Residues 378 to 398 (IFLLQVLYGAVALIVRCLALL) traverse the membrane as a helical segment. The Extracellular segment spans residues 399-406 (TLNHMGRR). A helical membrane pass occupies residues 407 to 427 (ISQILFMFLVGLSILANTFVP). The Cytoplasmic portion of the chain corresponds to 428 to 436 (KEMQTLRVA). A helical transmembrane segment spans residues 437–457 (LACLGIGCSAATFSSVAVHFI). The Extracellular segment spans residues 458 to 472 (ELIPTVLRARASGID). Residues 473 to 493 (LTASRIGAALAPLLMTLTVFF) traverse the membrane as a helical segment. Residues 494-495 (TT) lie on the Cytoplasmic side of the membrane. Residues 496 to 516 (LPWIIYGIFPIIGGLIVFLLP) traverse the membrane as a helical segment. At 517–541 (ETKNLPLPDTIKDVENQKKNLKEKA) the chain is on the extracellular side.

This sequence belongs to the major facilitator (TC 2.A.1) superfamily. Organic cation transporter (TC 2.A.1.19) family. Detected in fetal and adult liver, and in adult kidney.

The protein resides in the membrane. This is Solute carrier family 22 member 10 (SLC22A10) from Homo sapiens (Human).